A 377-amino-acid polypeptide reads, in one-letter code: Anhydro-N-acetylmuramic acid kinase (377 aa).

14–21 (GTSLDGVD) contacts ATP.

This sequence belongs to the anhydro-N-acetylmuramic acid kinase family.

The catalysed reaction is 1,6-anhydro-N-acetyl-beta-muramate + ATP + H2O = N-acetyl-D-muramate 6-phosphate + ADP + H(+). Its pathway is amino-sugar metabolism; 1,6-anhydro-N-acetylmuramate degradation. The protein operates within cell wall biogenesis; peptidoglycan recycling. Functionally, catalyzes the specific phosphorylation of 1,6-anhydro-N-acetylmuramic acid (anhMurNAc) with the simultaneous cleavage of the 1,6-anhydro ring, generating MurNAc-6-P. Is required for the utilization of anhMurNAc either imported from the medium or derived from its own cell wall murein, and thus plays a role in cell wall recycling. This is Anhydro-N-acetylmuramic acid kinase from Pasteurella multocida (strain Pm70).